We begin with the raw amino-acid sequence, 195 residues long: Ferredoxin-2, mitochondrial (195 aa).

A mitochondrion-targeting transit peptide spans 1 to 61; the sequence is MAAAAAVRAG…RRLRTSIGVC (61 aa). One can recognise a 2Fe-2S ferredoxin-type domain in the interval 81-182; that stretch reads NVVYIDRSGR…GMELTLPKVT (102 aa). Cys-117, Cys-123, Cys-126, and Cys-163 together coordinate [2Fe-2S] cluster.

It belongs to the adrenodoxin/putidaredoxin family. In terms of assembly, component of the mitochondrial core iron-sulfur cluster (ISC) complex composed of NFS1, LYRM4, NDUFAB1, ISCU, FXN, and FDX2; this complex is a heterohexamer containing two copies of each monomer. Form a heterodimer complex with NFS1. The cofactor is [2Fe-2S] cluster.

Its subcellular location is the mitochondrion. The protein resides in the mitochondrion matrix. In terms of biological role, electron donor, of the core iron-sulfur cluster (ISC) assembly complex, that acts to reduce the persulfide into sulfide during [2Fe-2S] clusters assembly on the scaffolding protein ISCU. The core iron-sulfur cluster (ISC) assembly complex is involved in the de novo synthesis of a [2Fe-2S] cluster, the first step of the mitochondrial iron-sulfur protein biogenesis. This process is initiated by the cysteine desulfurase complex (NFS1:LYRM4:NDUFAB1) that produces persulfide which is delivered on the scaffold protein ISCU in a FXN-dependent manner. Then this complex is stabilized by FDX2 which provides reducing equivalents to accomplish the [2Fe-2S] cluster assembly. Finally, the [2Fe-2S] cluster is transferred from ISCU to chaperone proteins, including HSCB, HSPA9 and GLRX5. Essential for coenzyme Q biosynthesis: together with FDXR, transfers the electrons required for the hydroxylation reaction performed by COQ6. This Danio rerio (Zebrafish) protein is Ferredoxin-2, mitochondrial.